A 505-amino-acid polypeptide reads, in one-letter code: Maturase K (505 aa).

It belongs to the intron maturase 2 family. MatK subfamily.

It localises to the plastid. The protein localises to the chloroplast. In terms of biological role, usually encoded in the trnK tRNA gene intron. Probably assists in splicing its own and other chloroplast group II introns. The polypeptide is Maturase K (Beta vulgaris (Sugar beet)).